We begin with the raw amino-acid sequence, 93 residues long: uncharacterized protein (93 aa).

The interval 26–73 (NRGTIFRPMTRNSGIVGRRGGPVAPAPFRNNVQKPGTRPPGFKPPSGV) is disordered.

This is an uncharacterized protein from Caenorhabditis elegans.